The following is a 352-amino-acid chain: Protein RecA (352 aa).

Position 67-74 (67-74 (GPESSGKT)) interacts with ATP.

It belongs to the RecA family.

Its subcellular location is the cytoplasm. Its function is as follows. Can catalyze the hydrolysis of ATP in the presence of single-stranded DNA, the ATP-dependent uptake of single-stranded DNA by duplex DNA, and the ATP-dependent hybridization of homologous single-stranded DNAs. It interacts with LexA causing its activation and leading to its autocatalytic cleavage. The sequence is that of Protein RecA from Chlamydia trachomatis serovar D (strain ATCC VR-885 / DSM 19411 / UW-3/Cx).